A 398-amino-acid polypeptide reads, in one-letter code: Acetate kinase (398 aa).

Mg(2+) is bound at residue Asn8. ATP is bound at residue Lys15. Residue Arg90 coordinates substrate. Asp147 functions as the Proton donor/acceptor in the catalytic mechanism. Residues 207 to 211, 282 to 284, and 330 to 334 each bind ATP; these read HIGAG, DMR, and GVGEN. Glu383 is a binding site for Mg(2+).

It belongs to the acetokinase family. In terms of assembly, homodimer. Mg(2+) is required as a cofactor. Mn(2+) serves as cofactor.

The protein resides in the cytoplasm. It catalyses the reaction acetate + ATP = acetyl phosphate + ADP. It participates in metabolic intermediate biosynthesis; acetyl-CoA biosynthesis; acetyl-CoA from acetate: step 1/2. Its function is as follows. Catalyzes the formation of acetyl phosphate from acetate and ATP. Can also catalyze the reverse reaction. This Limosilactobacillus fermentum (strain NBRC 3956 / LMG 18251) (Lactobacillus fermentum) protein is Acetate kinase.